The following is a 191-amino-acid chain: Thymidine kinase (191 aa).

Residues Gly9–Thr16 and Asp85–Gln88 contribute to the ATP site. The Proton acceptor role is filled by Glu86. Positions 143, 146, 181, and 184 each coordinate Zn(2+).

This sequence belongs to the thymidine kinase family. As to quaternary structure, homotetramer.

It localises to the cytoplasm. The enzyme catalyses thymidine + ATP = dTMP + ADP + H(+). The polypeptide is Thymidine kinase (Listeria innocua serovar 6a (strain ATCC BAA-680 / CLIP 11262)).